The sequence spans 627 residues: 1-deoxy-D-xylulose-5-phosphate synthase (627 aa).

Thiamine diphosphate-binding positions include His-80 and 121 to 123 (GHS). Asp-152 contacts Mg(2+). Thiamine diphosphate contacts are provided by residues 153-154 (GA), Asn-181, Tyr-288, and Glu-370. Residue Asn-181 coordinates Mg(2+).

Belongs to the transketolase family. DXPS subfamily. In terms of assembly, homodimer. Mg(2+) is required as a cofactor. The cofactor is thiamine diphosphate.

The catalysed reaction is D-glyceraldehyde 3-phosphate + pyruvate + H(+) = 1-deoxy-D-xylulose 5-phosphate + CO2. It participates in metabolic intermediate biosynthesis; 1-deoxy-D-xylulose 5-phosphate biosynthesis; 1-deoxy-D-xylulose 5-phosphate from D-glyceraldehyde 3-phosphate and pyruvate: step 1/1. Its function is as follows. Catalyzes the acyloin condensation reaction between C atoms 2 and 3 of pyruvate and glyceraldehyde 3-phosphate to yield 1-deoxy-D-xylulose-5-phosphate (DXP). The protein is 1-deoxy-D-xylulose-5-phosphate synthase of Vibrio atlanticus (strain LGP32) (Vibrio splendidus (strain Mel32)).